The following is a 328-amino-acid chain: GMP reductase (328 aa).

Cys176 acts as the Thioimidate intermediate in catalysis. Residue 205–228 (IIADGGIRTHGDIAKSIRFGASMI) participates in NADP(+) binding.

Belongs to the IMPDH/GMPR family. GuaC type 2 subfamily.

It catalyses the reaction IMP + NH4(+) + NADP(+) = GMP + NADPH + 2 H(+). Its function is as follows. Catalyzes the irreversible NADPH-dependent deamination of GMP to IMP. It functions in the conversion of nucleobase, nucleoside and nucleotide derivatives of G to A nucleotides, and in maintaining the intracellular balance of A and G nucleotides. The chain is GMP reductase from Streptococcus pneumoniae serotype 2 (strain D39 / NCTC 7466).